The following is a 606-amino-acid chain: Lysosomal cobalamin transporter ABCD4 (606 aa).

Positions 39 to 332 (NVLMFMTLLC…CFTQLIDLST (294 aa)) constitute an ABC transmembrane type-1 domain. The next 5 helical transmembrane spans lie at 43–63 (FMTL…VGLI), 76–96 (LDGF…NSTL), 190–210 (IFGY…PIVT), 279–299 (YLGS…GVYG), and 314–334 (AFVC…STTL). One can recognise an ABC transporter domain in the interval 389 to 603 (LDRVSILAPS…GGGSWELTRI (215 aa)). 421-428 (GNTGTGKT) is a binding site for ATP.

This sequence belongs to the ABC transporter superfamily. ABCD family. Peroxisomal fatty acyl CoA transporter (TC 3.A.1.203) subfamily. Homodimer or heterodimer. Interacts with LMBRD1; this interaction induces the translocation of ABCD4 from the ER to the lysosome membrane. Interacts with LMBRD1 and MMACHC; this interaction ensures the transport of cobalamin from the lysosome to the cytosol.

The protein localises to the endoplasmic reticulum membrane. Its subcellular location is the lysosome membrane. The catalysed reaction is an R-cob(III)alamin(out) + ATP + H2O = an R-cob(III)alamin(in) + ADP + phosphate + H(+). In terms of biological role, lysosomal membrane protein that transports cobalamin (Vitamin B12) from the lysosomal lumen to the cytosol in an ATP-dependent manner. Targeted by LMBRD1 lysosomal chaperone from the endoplasmic reticulum to the lysosomal membrane. Then forms a complex with lysosomal chaperone LMBRD1 and cytosolic MMACHC to transport cobalamin across the lysosomal membrane. This Mus musculus (Mouse) protein is Lysosomal cobalamin transporter ABCD4.